Consider the following 56-residue polypeptide: Alpha-conotoxin TxIA (56 aa).

A signal peptide spans 1 to 16; that stretch reads MFTVFLLVVLATAVVS. Residues 17-39 constitute a propeptide that is removed on maturation; sequence FTSDRASDDGKAAASDLITLTIK. Cystine bridges form between Cys-41/Cys-47 and Cys-42/Cys-55. Positions 43–45 are ser-Xaa-Pro motif, crucial for potent interaction with nAChR; that stretch reads SRP. 4-hydroxyproline; partial is present on residues Pro-45 and Pro-46. A Cysteine amide modification is found at Cys-55.

It belongs to the conotoxin A superfamily. Post-translationally, exists in 4 different forms, depending on hydroxylations. Tx1a-PP does not contain hydroxyproline, tx1a-OP has one hydroxyproline at position 45, tx1a-PO has one hydroxyproline at position 46, and tx1a-PP has two hydroxyprolines at positions 45 and 46. Expressed by the venom duct. Tx1a that containing 1 or 2 non-hydroxylated prolines are mostly present in part 5 of the venom duct (distal part near the pharynx), whereas tx1a-OO (with 2 hydroxyprolines) is mostly present in part 4 of the venom duct (follewed by part 3).

It is found in the secreted. Functionally, alpha-conotoxins act on postsynaptic membranes, they bind to the nicotinic acetylcholine receptors (nAChR) and thus inhibit them. This toxin inhibits rat alpha-3-beta-2/CHRNA3-CHRNB2 (IC(50)=3.5 nM), rat alpha-7/CHRNA7 (IC(50)=392 nM) nAChR, and the L.stagnalis soluble acetylcholine receptor (all tested without hydroxyproline). The polypeptide is Alpha-conotoxin TxIA (Conus textile (Cloth-of-gold cone)).